Consider the following 494-residue polypeptide: tRNA-2-methylthio-N(6)-dimethylallyladenosine synthase (494 aa).

Positions 4 to 120 (RSYQVRTFGC…LPVLLERARH (117 aa)) constitute an MTTase N-terminal domain. [4Fe-4S] cluster is bound by residues Cys-13, Cys-49, Cys-83, Cys-157, Cys-161, and Cys-164. The Radical SAM core domain occupies 143–374 (RASHHSAWVS…SLQDEMSWAE (232 aa)). The 74-residue stretch at 376–449 (RAQVGRRVEI…PHHLTADGPL (74 aa)) folds into the TRAM domain. The interval 465-494 (RAIAGDTPRPDRPAVSLGMPQLRPSAPAAR) is disordered.

Belongs to the methylthiotransferase family. MiaB subfamily. Monomer. [4Fe-4S] cluster is required as a cofactor.

It is found in the cytoplasm. It carries out the reaction N(6)-dimethylallyladenosine(37) in tRNA + (sulfur carrier)-SH + AH2 + 2 S-adenosyl-L-methionine = 2-methylsulfanyl-N(6)-dimethylallyladenosine(37) in tRNA + (sulfur carrier)-H + 5'-deoxyadenosine + L-methionine + A + S-adenosyl-L-homocysteine + 2 H(+). Catalyzes the methylthiolation of N6-(dimethylallyl)adenosine (i(6)A), leading to the formation of 2-methylthio-N6-(dimethylallyl)adenosine (ms(2)i(6)A) at position 37 in tRNAs that read codons beginning with uridine. This is tRNA-2-methylthio-N(6)-dimethylallyladenosine synthase from Parafrankia sp. (strain EAN1pec).